A 184-amino-acid chain; its full sequence is Lipocalin-15 (184 aa).

The N-terminal stretch at 1 to 20 (MMSFLLGAILTLLWAPTAQA) is a signal peptide. Cysteine 83 and cysteine 176 are oxidised to a cystine.

This sequence belongs to the calycin superfamily. Lipocalin family.

The protein localises to the secreted. The protein is Lipocalin-15 (LCN15) of Homo sapiens (Human).